Here is a 504-residue protein sequence, read N- to C-terminus: Probable cytochrome P450 6a21 (504 aa).

Cys449 contributes to the heme binding site.

This sequence belongs to the cytochrome P450 family. The cofactor is heme.

The protein localises to the endoplasmic reticulum membrane. It is found in the microsome membrane. Functionally, may be involved in the metabolism of insect hormones and in the breakdown of synthetic insecticides. The polypeptide is Probable cytochrome P450 6a21 (Cyp6a21) (Drosophila melanogaster (Fruit fly)).